An 864-amino-acid chain; its full sequence is Leucine--tRNA ligase (864 aa).

Residues 42–52 (PYPSGKLHMGH) carry the 'HIGH' region motif. The 'KMSKS' region signature appears at 624 to 628 (KMSKS). Residue lysine 627 coordinates ATP.

The protein belongs to the class-I aminoacyl-tRNA synthetase family.

It is found in the cytoplasm. It carries out the reaction tRNA(Leu) + L-leucine + ATP = L-leucyl-tRNA(Leu) + AMP + diphosphate. The chain is Leucine--tRNA ligase from Burkholderia ambifaria (strain MC40-6).